Consider the following 219-residue polypeptide: Albonoursin synthase (219 aa).

Belongs to the nitroreductase family. As to quaternary structure, homomer. FMN serves as cofactor. In terms of processing, the N-terminus is blocked.

The protein localises to the cytoplasm. The enzyme catalyses cyclo(L-phenylalanyl-L-leucyl) + 2 O2 = albonoursin + 2 H2O2. Functionally, involved in the biosynthesis of albonoursin (cyclo[(alpha,beta-dehydro-Phe)-(alpha,beta-dehydro-Leu)]), an antibacterial peptide. Catalyzes the formation of alpha,beta-dehydro-Phe (DPhe) and alpha,beta-dehydro-Leu (DLeu) residues during the biosynthesis of albonoursin. The catalytic reaction of cyclo(L-Phe-L-Leu) occurs in a two-step sequential alpha-beta-dehydrogenation leading first to cyclo(alpha,beta-dehydro-Phe-L-Leu) and finally to albonoursin. Can also use cyclo(L-Phe-L-His), cyclo(L-Trp-L-Trp), cyclo(L-Leu-L-Ala), cyclo(L-Phe-Gly), cyclo(L-Leu-Gly), cyclo(L-Ser-Gly) and cyclo(L-Glu-Gly) as substrate suggesting that the diketopiperazine ring is essential for the enzymatic reaction. The polypeptide is Albonoursin synthase (albA) (Streptomyces noursei (Streptomyces albulus)).